The primary structure comprises 223 residues: Neurotrophic factor BDNF precursor form (223 aa).

Residues 1–5 (SCMKA) form the signal peptide. The propeptide occupies 6 to 114 (APMKEVSIRG…AANMSMRVRR (109 aa)). Asparagine 107 carries N-linked (GlcNAc...) asparagine glycosylation. 2 disulfide bridges follow: cysteine 127–cysteine 194 and cysteine 172–cysteine 223.

Belongs to the NGF-beta family.

It is found in the secreted. In terms of biological role, promotes the survival of neuronal populations that are all located either in the central nervous system or directly connected to it. The protein is Neurotrophic factor BDNF precursor form (BDNF) of Eryx colubrinus colubrinus.